We begin with the raw amino-acid sequence, 273 residues long: 2-dehydro-3-deoxyphosphooctonate aldolase (273 aa).

Belongs to the KdsA family.

Its subcellular location is the cytoplasm. It catalyses the reaction D-arabinose 5-phosphate + phosphoenolpyruvate + H2O = 3-deoxy-alpha-D-manno-2-octulosonate-8-phosphate + phosphate. It participates in carbohydrate biosynthesis; 3-deoxy-D-manno-octulosonate biosynthesis; 3-deoxy-D-manno-octulosonate from D-ribulose 5-phosphate: step 2/3. The protein operates within bacterial outer membrane biogenesis; lipopolysaccharide biosynthesis. This chain is 2-dehydro-3-deoxyphosphooctonate aldolase, found in Nitratidesulfovibrio vulgaris (strain DP4) (Desulfovibrio vulgaris).